The primary structure comprises 305 residues: NADH-cytochrome b5 reductase 1 (305 aa).

The helical transmembrane segment at 8–28 (VLLASLGVGLVTLLGLAVGSY) threads the bilayer. The FAD-binding FR-type domain maps to 44 to 156 (NEKYLLRLLD…RGPSGLLTYT (113 aa)). FAD is bound by residues 136 to 166 (DSLK…IQPN) and 175 to 210 (VAKK…QCFL).

This sequence belongs to the flavoprotein pyridine nucleotide cytochrome reductase family. It depends on FAD as a cofactor. In terms of tissue distribution, widely expressed.

The protein localises to the membrane. The enzyme catalyses 2 Fe(III)-[cytochrome b5] + NADH = 2 Fe(II)-[cytochrome b5] + NAD(+) + H(+). Its function is as follows. NADH-cytochrome b5 reductases are involved in desaturation and elongation of fatty acids, cholesterol biosynthesis, drug metabolism, and, in erythrocyte, methemoglobin reduction. The sequence is that of NADH-cytochrome b5 reductase 1 (CYB5R1) from Homo sapiens (Human).